Reading from the N-terminus, the 106-residue chain is Large ribosomal subunit protein uL24 (106 aa).

Belongs to the universal ribosomal protein uL24 family. In terms of assembly, part of the 50S ribosomal subunit.

One of two assembly initiator proteins, it binds directly to the 5'-end of the 23S rRNA, where it nucleates assembly of the 50S subunit. Its function is as follows. One of the proteins that surrounds the polypeptide exit tunnel on the outside of the subunit. This Laribacter hongkongensis (strain HLHK9) protein is Large ribosomal subunit protein uL24.